We begin with the raw amino-acid sequence, 90 residues long: Transcriptional repressor SdpR (90 aa).

Positions 1–87 (MNNVFKAISD…WMLNFINKGD (87 aa)) constitute an HTH arsR-type domain. The H-T-H motif DNA-binding region spans 39–62 (PSISHHLNILKQAEVISDHRKGQF).

Its subcellular location is the cytoplasm. Represses the transcription of the sdpIR operon and of several other operons that probably contribute to delaying commitment to sporulation. The chain is Transcriptional repressor SdpR (sdpR) from Bacillus subtilis (strain 168).